Here is a 287-residue protein sequence, read N- to C-terminus: MDKKMRPVIKASLHYLALAIVSVIWLIPVYAMLINGFKSNFEVLSTPVLVPPTKITFEAYVSVLLSLAKPLINSLIIVIPTSFISAFLGAMGAYFFYTLSYSFSRASSAISDVLFSLISLATFIPQEATLLPLTRLIVSMGLLDSYIGIIFALLIFYIPTGALLMSMFISVIPRSLIEAAKMDGTGDLKIFMKIVFPLSMPGFISTLIFIIIQAWNNFFIPLVLVTTPGMKLTSIAVLSYSGAYGTLYNDTFAAGMVASIIPLAIFVFLGRYFIRGLMALGGGGKGV.

Helical transmembrane passes span His-14–Ile-34, Ile-76–Phe-96, Val-113–Leu-133, Ile-149–Ile-169, Ile-194–Ala-214, Phe-218–Leu-238, and Asp-250–Gly-270. An ABC transmembrane type-1 domain is found at Leu-71 to Leu-269.

It belongs to the binding-protein-dependent transport system permease family. In terms of assembly, the complex is composed of two ATP-binding proteins (GlcV), two transmembrane proteins (GlcT and GlcU) and a solute-binding protein (GlcS).

It localises to the cell membrane. Its function is as follows. Part of the ABC transporter complex GlcSTUV involved in glucose uptake. Responsible for the translocation of the substrate across the membrane. The protein is Glucose import system permease protein GlcU of Saccharolobus solfataricus (strain ATCC 35092 / DSM 1617 / JCM 11322 / P2) (Sulfolobus solfataricus).